We begin with the raw amino-acid sequence, 292 residues long: uncharacterized protein (292 aa).

The helical transmembrane segment at 13-35 (LFILFIIVVCIYLLPRVAINAFY) threads the bilayer.

The protein belongs to the serine esterase family.

The protein resides in the membrane. This is an uncharacterized protein from Salmonella typhimurium (strain LT2 / SGSC1412 / ATCC 700720).